The primary structure comprises 246 residues: Neuromodulin (246 aa).

Residues 1 to 246 (MLCCMRRTKQ…EESKADQENA (246 aa)) are disordered. S-palmitoyl cysteine attachment occurs at residues C3 and C4. A compositionally biased stretch (basic and acidic residues) spans 9–33 (KQVEKNEDGDQKIEQDGIKPEDKAH). An IQ domain is found at 32-61 (AHKAATKIQASFRGHITRKKLKGEKKADAP). Composition is skewed to low complexity over residues 87-99 (ASAA…ADSA) and 125-157 (SEQP…KAST). Positions 164–176 (KADEAQDKEEPKQ) are enriched in basic and acidic residues. Low complexity predominate over residues 177 to 203 (ADVPAADTTATTTPAAEDATAKATAQP). Basic and acidic residues-rich tracts occupy residues 213 to 225 (TEEK…ETKP) and 237 to 246 (EESKADQENA).

It belongs to the neuromodulin family. Binds calmodulin with a greater affinity in the absence of Ca(2+) than in its presence. Palmitoylated. Palmitoylation is essential for plasma membrane association. In terms of tissue distribution, expressed in neurons.

It is found in the cell membrane. The protein localises to the cell projection. Its subcellular location is the growth cone membrane. It localises to the synapse. The protein resides in the filopodium membrane. This protein is associated with nerve growth. It is a major component of the motile 'growth cones' that form the tips of elongating axons. Plays a role in axonal and dendritic filopodia induction. The polypeptide is Neuromodulin (GAP43) (Gallus gallus (Chicken)).